The following is a 153-amino-acid chain: Large ribosomal subunit protein uL29 (153 aa).

Residues 1 to 83 (MNKELRAKTN…KEQTKQKEIQ (83 aa)) form a large ribosomal subunit protein uL29 region. Residues 84–153 (ESVKKIKQLR…NVKAKTKKKG (70 aa)) are unknown. The span at 100 to 121 (NKEKRLANAEKVKAAPKPEQKT) shows a compositional bias: basic and acidic residues. The interval 100–153 (NKEKRLANAEKVKAAPKPEQKTKKVKKAPKKTETVKPTTNKNKKNVKAKTKKKG) is disordered. Positions 140-153 (KNKKNVKAKTKKKG) are enriched in basic residues.

Belongs to the universal ribosomal protein uL29 family.

The sequence is that of Large ribosomal subunit protein uL29 from Mycoplasmoides gallisepticum (strain R(low / passage 15 / clone 2)) (Mycoplasma gallisepticum).